A 255-amino-acid chain; its full sequence is Imidazole glycerol phosphate synthase subunit HisF (255 aa).

Active-site residues include aspartate 12 and aspartate 131.

Belongs to the HisA/HisF family. Heterodimer of HisH and HisF.

The protein localises to the cytoplasm. It carries out the reaction 5-[(5-phospho-1-deoxy-D-ribulos-1-ylimino)methylamino]-1-(5-phospho-beta-D-ribosyl)imidazole-4-carboxamide + L-glutamine = D-erythro-1-(imidazol-4-yl)glycerol 3-phosphate + 5-amino-1-(5-phospho-beta-D-ribosyl)imidazole-4-carboxamide + L-glutamate + H(+). Its pathway is amino-acid biosynthesis; L-histidine biosynthesis; L-histidine from 5-phospho-alpha-D-ribose 1-diphosphate: step 5/9. IGPS catalyzes the conversion of PRFAR and glutamine to IGP, AICAR and glutamate. The HisF subunit catalyzes the cyclization activity that produces IGP and AICAR from PRFAR using the ammonia provided by the HisH subunit. The protein is Imidazole glycerol phosphate synthase subunit HisF of Ruthia magnifica subsp. Calyptogena magnifica.